We begin with the raw amino-acid sequence, 168 residues long: MKIKGKVWKFGDNIDTDAIIPARYLNTSDPKELAKHVMEDADSSFPSKVKPGDIIIAGRNFGCGSSREHAPIAIKASGIRAVIAKSYARIFFRNAFNIGLPIFEVPELIDETNEGDEVEIDMNSGQIINLTKGKKYNTKPIPPFMQELIKAGGLVEWTKKRLSMEDIK.

The protein belongs to the LeuD family. LeuD type 2 subfamily. Heterodimer of LeuC and LeuD.

It carries out the reaction (2R,3S)-3-isopropylmalate = (2S)-2-isopropylmalate. Its pathway is amino-acid biosynthesis; L-leucine biosynthesis; L-leucine from 3-methyl-2-oxobutanoate: step 2/4. Functionally, catalyzes the isomerization between 2-isopropylmalate and 3-isopropylmalate, via the formation of 2-isopropylmaleate. This chain is 3-isopropylmalate dehydratase small subunit, found in Thermodesulfovibrio yellowstonii (strain ATCC 51303 / DSM 11347 / YP87).